The sequence spans 320 residues: o-succinylbenzoate synthase (320 aa).

The active-site Proton donor is Lys133. Positions 161, 190, and 213 each coordinate Mg(2+). The active-site Proton acceptor is Lys235.

Belongs to the mandelate racemase/muconate lactonizing enzyme family. MenC type 1 subfamily. Requires a divalent metal cation as cofactor.

The catalysed reaction is (1R,6R)-6-hydroxy-2-succinyl-cyclohexa-2,4-diene-1-carboxylate = 2-succinylbenzoate + H2O. It participates in quinol/quinone metabolism; 1,4-dihydroxy-2-naphthoate biosynthesis; 1,4-dihydroxy-2-naphthoate from chorismate: step 4/7. Its pathway is quinol/quinone metabolism; menaquinone biosynthesis. Functionally, converts 2-succinyl-6-hydroxy-2,4-cyclohexadiene-1-carboxylate (SHCHC) to 2-succinylbenzoate (OSB). The chain is o-succinylbenzoate synthase from Salmonella typhi.